The sequence spans 218 residues: Ribose-5-phosphate isomerase A (218 aa).

Residues Thr-27 to Thr-30, Asp-80 to Asp-83, and Lys-93 to Gly-96 contribute to the substrate site. Glu-102 serves as the catalytic Proton acceptor. Lys-120 is a substrate binding site.

Belongs to the ribose 5-phosphate isomerase family. In terms of assembly, homodimer.

It catalyses the reaction aldehydo-D-ribose 5-phosphate = D-ribulose 5-phosphate. It functions in the pathway carbohydrate degradation; pentose phosphate pathway; D-ribose 5-phosphate from D-ribulose 5-phosphate (non-oxidative stage): step 1/1. In terms of biological role, catalyzes the reversible conversion of ribose-5-phosphate to ribulose 5-phosphate. In Thiobacillus denitrificans (strain ATCC 25259 / T1), this protein is Ribose-5-phosphate isomerase A.